Here is a 432-residue protein sequence, read N- to C-terminus: Glutamate--cysteine ligase EgtA (432 aa).

This sequence belongs to the glutamate--cysteine ligase type 2 family. EgtA subfamily.

The enzyme catalyses L-cysteine + L-glutamate + ATP = gamma-L-glutamyl-L-cysteine + ADP + phosphate + H(+). It functions in the pathway amino-acid biosynthesis; ergothioneine biosynthesis. Its function is as follows. Catalyzes the synthesis of gamma-glutamylcysteine (gamma-GC) which is used as substrate for the biosynthesis of the low-molecular thiol compound ergothioneine (ERG). ERG is one of the major redox buffers which protects bacteria against redox stressors and antibiotics; loss of ERG or mycothiol (MSH, the other major redox buffer in this bacteria) leads to respiratory alterations and bioenergetic deficiencies that negatively impact virulence. This chain is Glutamate--cysteine ligase EgtA (egtA), found in Mycobacterium tuberculosis (strain CDC 1551 / Oshkosh).